A 157-amino-acid chain; its full sequence is MAKKKGNLGSSTIAQNKKARFEYHIDETFEAGLSLAGWEVKSLRAGKAQLTDTYILIKNGEAWLLGSHITPLNTVSTHVVADPSRTRKLLLHRKEIAKIFSRTQDKGHTCVPLKLYWKKNLVKCELALVRGKKLHDKRATEKARDWNREKARIMRAH.

It belongs to the SmpB family.

Its subcellular location is the cytoplasm. Its function is as follows. Required for rescue of stalled ribosomes mediated by trans-translation. Binds to transfer-messenger RNA (tmRNA), required for stable association of tmRNA with ribosomes. tmRNA and SmpB together mimic tRNA shape, replacing the anticodon stem-loop with SmpB. tmRNA is encoded by the ssrA gene; the 2 termini fold to resemble tRNA(Ala) and it encodes a 'tag peptide', a short internal open reading frame. During trans-translation Ala-aminoacylated tmRNA acts like a tRNA, entering the A-site of stalled ribosomes, displacing the stalled mRNA. The ribosome then switches to translate the ORF on the tmRNA; the nascent peptide is terminated with the 'tag peptide' encoded by the tmRNA and targeted for degradation. The ribosome is freed to recommence translation, which seems to be the essential function of trans-translation. The polypeptide is SsrA-binding protein (Chromohalobacter salexigens (strain ATCC BAA-138 / DSM 3043 / CIP 106854 / NCIMB 13768 / 1H11)).